We begin with the raw amino-acid sequence, 1486 residues long: Chromosome partition protein MukB (1486 aa).

34 to 41 (GGNGAGKS) lines the ATP pocket. Coiled coils occupy residues 326 to 418 (LEAD…QYNQ), 444 to 480 (LETF…QAYQ), and 509 to 603 (RHLA…RAPV). The tract at residues 666–783 (PGGSEDQRLN…EVPLFGRAAR (118 aa)) is flexible hinge. Coiled-coil stretches lie at residues 835–923 (EAEI…AKLE), 977–1115 (EMLS…TAKA), and 1209–1266 (VEAI…QNVS).

This sequence belongs to the SMC family. MukB subfamily. Homodimerization via its hinge domain. Binds to DNA via its C-terminal region. Interacts, and probably forms a ternary complex, with MukE and MukF via its C-terminal region. The complex formation is stimulated by calcium or magnesium. Interacts with tubulin-related protein FtsZ.

Its subcellular location is the cytoplasm. It localises to the nucleoid. Its function is as follows. Plays a central role in chromosome condensation, segregation and cell cycle progression. Functions as a homodimer, which is essential for chromosome partition. Involved in negative DNA supercoiling in vivo, and by this means organize and compact chromosomes. May achieve or facilitate chromosome segregation by condensation DNA from both sides of a centrally located replisome during cell division. The protein is Chromosome partition protein MukB of Shigella boydii serotype 4 (strain Sb227).